The sequence spans 182 residues: Meiotically up-regulated gene 82 protein (182 aa).

The disordered stretch occupies residues 161 to 182 (EKRLSEKKYKQKKKTQRRITMD). Positions 169–182 (YKQKKKTQRRITMD) are enriched in basic residues.

Belongs to the prokaryotic/mitochondrial release factor family.

It localises to the mitochondrion. Its function is as follows. Has a role in meiosis. The chain is Meiotically up-regulated gene 82 protein (mug82) from Schizosaccharomyces pombe (strain 972 / ATCC 24843) (Fission yeast).